Here is a 65-residue protein sequence, read N- to C-terminus: Large ribosomal subunit protein bL35 (65 aa).

The disordered stretch occupies residues 1–26; it reads MPKIKTLRSAAKRFKKTESGKFKRKQ.

This sequence belongs to the bacterial ribosomal protein bL35 family.

This chain is Large ribosomal subunit protein bL35, found in Buchnera aphidicola subsp. Baizongia pistaciae (strain Bp).